Here is a 156-residue protein sequence, read N- to C-terminus: Terrestric acid biosynthesis cluster protein E (156 aa).

It functions in the pathway secondary metabolite biosynthesis. Its function is as follows. Part of the tra gene cluster that produces terrestric acid. The clavatol biosynthesis cluster cla and the terrestric acid cluster tra are both involved in the production of peniphenones and penilactones. The non-reducing PKS claF is responsible for the formation of clavatol from successive condensations of 3 malonyl-CoA units, presumably with a simple acetyl-CoA starter unit, and 2 methylation steps. The esterase claE probably collaborates with claF by catalyzing the hydrolysis of ACP-bound acyl intermediates to free the ACP from stalled intermediates. The clavatol oxidase claD then converts clavatol to hydroxyclavatol. Spontaneous dehydration of hydroxyclavatol leads to the accumulation of the highly active ortho-quinone methide. On the other hand, the PKS-NRPS hybrid traA is involved in the formation of crustosic acid, with the help of traB and traD. The polyketide synthase module (PKS) of traA is responsible for the synthesis of the polyketide backbone via the condensation of an acetyl-CoA starter unit with 3 malonyl-CoA units. The downstream nonribosomal peptide synthetase (NRPS) module then amidates the carboxyl end of the polyketide with L-malic acid. Because traA lacks a designated enoylreductase (ER) domain, the required activity is provided the enoyl reductase traG. Crustosic acid undergoes decarboxylation and isomerization to the terrestric acid, catalyzed by the 2-oxoglutarate-dependent dioxygenase traH. Both acids are further converted to the 2 gamma-butyrolactones (R)-5-methyltetronic acid and (S)-5-carboxylmethyltetronic acid, with involvement of the cytochrome P450 monooxygenase claJ. Spontaneous addition of the methide to these gamma-butyrolactones leads to peniphenone D and penilactone D, which undergo again stereospecific attacking by methide to give penilactones A and B. TraE seems not to be involved in the biosynthesis of peniphenones and penilactones in the conditions used to study its function. This Penicillium crustosum (Blue mold fungus) protein is Terrestric acid biosynthesis cluster protein E.